The sequence spans 342 residues: Phomopsin biosynthesis cluster protein B (342 aa).

Residues 1-22 are disordered; the sequence is MESIAKAKSLPNKGRTYDSQRP. A helical membrane pass occupies residues 87–107; sequence VLIIGCAVISLFAIIGALGFA. The segment at 118 to 186 is disordered; the sequence is CASPAHQNPH…QCGESPDEAQ (69 aa). Over residues 144–155 the composition is skewed to low complexity; sequence HSGSHSSSSSTN. Asn248 is a glycosylation site (N-linked (GlcNAc...) asparagine).

The protein localises to the membrane. Functionally, part of the gene cluster that mediates the biosynthesis of the phomopsins, a group of hexapeptide mycotoxins which infects lupins and causes lupinosis disease in livestock. The role of phomB within the phomopsins biosynthesis pathway has still to be determined. The pathway starts with the processing of the precursor phomA by several endopeptidases including kexin proteases as well as the cluster-specific S41 family peptidase phomP1 and the oligopeptidase phomG to produce 10 identical copies of the hexapeptide Tyr-Val-Ile-Pro-Ile-Asp. After being excised from the precursor peptide, the core peptides are cyclized and modified post-translationally by enzymes encoded within the gene cluster. The timing and order of proteolysis of the phomA precursor and PTMs are still unknown. Two tyrosinase-like enzymes, phomQ1 and phomQ2, catalyze the chlorination and hydroxylation of Tyr, respectively. PhomYb, is proposed to be involved in the construction of the macrocyclic structure. The other 4 ustYa family proteins may be involved in PTMs that generate the unique structure of phomopsin A. PhomYa is required for the hydroxylation of C-beta of Tyr. PhomYc, phomYd, and phomYe are responsible for the biosynthesis of 2,3-dehydroisoleucine (dIle), 2,3-dehydroaspartic acid (dAsp), and 3,4-dehydroproline (dPro), respectively. While dIle formation by phomYc is indispensable for the installation of dAsp by phomYd, the order of the other PTMs have not been elucidated yet. Most of the biosynthetic enzymes likely have broad substrate specificity, and thus, there might be a metabolic grid from a precursor to phomopsin A. The enzyme(s) responsible for the biosynthesis of 3,4-dehydrovaline (dVal) have also not been identified yet. Finally, phomM acts as an S-adenosylmethionine-dependent alpha-N-methyltransferase that catalyzes two successive N-methylation reactions, converting N-desmethyl-phomopsin A to phomopsin A and phomopsin A further to an N,N-dimethylated congener called phomopsin E. In Diaporthe leptostromiformis (Lupinosis disease fungus), this protein is Phomopsin biosynthesis cluster protein B.